The primary structure comprises 656 residues: ATP-dependent zinc metalloprotease FtsH (656 aa).

Residues 1–45 are Cytoplasmic-facing; it reads MAIFARRIGLNQHSAYGSRQRVIVMKNFGKKALIKQQSPKRVAWT. Residues 46–66 form a helical membrane-spanning segment; that stretch reads GALAASLIMLPTMFGGNPVLA. At 67–147 the chain is on the lumenal side; that stretch reads QKAERESLSY…EISSANSRAA (81 aa). Residues 148-168 traverse the membrane as a helical segment; sequence VGLLINLMWILPLVALMLLFL. Residues 169-656 are Cytoplasmic-facing; it reads RRSTNASSQA…DEQLSMVNSQ (488 aa). ATP is bound at residue 239 to 246; it reads GPPGTGKT. Histidine 460 is a Zn(2+) binding site. Residue glutamate 461 is part of the active site. Positions 464 and 538 each coordinate Zn(2+).

In the central section; belongs to the AAA ATPase family. This sequence in the C-terminal section; belongs to the peptidase M41 family. As to quaternary structure, homohexamer. Requires Zn(2+) as cofactor.

The protein localises to the cellular thylakoid membrane. Acts as a processive, ATP-dependent zinc metallopeptidase for both cytoplasmic and membrane proteins. Plays a role in the quality control of integral membrane proteins. This is ATP-dependent zinc metalloprotease FtsH from Nostoc sp. (strain PCC 7120 / SAG 25.82 / UTEX 2576).